The chain runs to 468 residues: MLPAALTSLLGPFLLAWVLPLARGQTPNYTRPVFLCGGDVTGESGYVASEGFPNLYPPNKKCIWTITVPEGQTVSLSFRVFDMELHPSCRYDALEVFAGSGTSGQRLGRFCGTFRPAPVVAPGNQVTLRMTTDEGTGGRGFLLWYSGRATSGTEHQFCGGRMEKAQGTLTTPNWPESDYPPGISCSWHIIAPSNQVIMLTFGKFDVEPDTYCRYDSVSVFNGAVSDDSKRLGKFCGDKAPSPISSEGNELLVQFVSDLSVTADGFSASYRTLPRDAVEKESAPSPGEDAQHGPQSRSDPKTGTGPKVKPPSKPKVQPVEKPEGSPATQATPVAPDAPSITCPKQYKRSGTLQSNFCSSSLVVTGTVKAMVRGPGEGLTVTVSLLGVYKTGDLDLPSPASGTSLKFYVPCKQMPPMKKGASYLLMGQVEENRGPILPPESFVVLYRPNQDQILSNLSKRKCPSQPRPDA.

An N-terminal signal peptide occupies residues 1–24; that stretch reads MLPAALTSLLGPFLLAWVLPLARG. Residue asparagine 28 is glycosylated (N-linked (GlcNAc...) asparagine). 4 cysteine pairs are disulfide-bonded: cysteine 36-cysteine 62, cysteine 89-cysteine 111, cysteine 158-cysteine 185, and cysteine 212-cysteine 235. CUB domains lie at 36–148 and 158–272; these read CGGD…YSGR and CGGR…YRTL. Phosphothreonine is present on threonine 41. At serine 49 the chain carries Phosphoserine. The tract at residues 271–341 is disordered; sequence TLPRDAVEKE…VAPDAPSITC (71 aa). Basic and acidic residues predominate over residues 272–281; sequence LPRDAVEKES. 2 cysteine pairs are disulfide-bonded: cysteine 341/cysteine 409 and cysteine 356/cysteine 460. Positions 341-460 constitute an NTR domain; that stretch reads CPKQYKRSGT…ILSNLSKRKC (120 aa). Asparagine 454 carries an N-linked (GlcNAc...) asparagine glycan.

As to quaternary structure, interacts with EFEMP2. As to expression, expressed at highest levels in collagen-rich tissues, especially tendon. Also expressed in cornea and sterna.

The protein localises to the secreted. Functionally, binds to the C-terminal propeptide of type I procollagen and enhances procollagen C-proteinase activity. The chain is Procollagen C-endopeptidase enhancer 1 (Pcolce) from Rattus norvegicus (Rat).